Reading from the N-terminus, the 333-residue chain is uncharacterized protein (333 aa).

This sequence belongs to the proline racemase family.

This is an uncharacterized protein from Vibrio parahaemolyticus serotype O3:K6 (strain RIMD 2210633).